The sequence spans 438 residues: 3-phosphoshikimate 1-carboxyvinyltransferase (438 aa).

Residues Lys-21, Ser-22, and Arg-26 each contribute to the 3-phosphoshikimate site. Position 21 (Lys-21) interacts with phosphoenolpyruvate. Phosphoenolpyruvate-binding residues include Gly-95 and Arg-123. 4 residues coordinate 3-phosphoshikimate: Ser-167, Gln-169, Asp-315, and Lys-342. Phosphoenolpyruvate is bound at residue Gln-169. Asp-315 acts as the Proton acceptor in catalysis. Phosphoenolpyruvate is bound by residues Arg-346 and Arg-387.

It belongs to the EPSP synthase family. In terms of assembly, monomer.

It localises to the cytoplasm. The enzyme catalyses 3-phosphoshikimate + phosphoenolpyruvate = 5-O-(1-carboxyvinyl)-3-phosphoshikimate + phosphate. Its pathway is metabolic intermediate biosynthesis; chorismate biosynthesis; chorismate from D-erythrose 4-phosphate and phosphoenolpyruvate: step 6/7. Its function is as follows. Catalyzes the transfer of the enolpyruvyl moiety of phosphoenolpyruvate (PEP) to the 5-hydroxyl of shikimate-3-phosphate (S3P) to produce enolpyruvyl shikimate-3-phosphate and inorganic phosphate. The protein is 3-phosphoshikimate 1-carboxyvinyltransferase of Coxiella burnetii (strain CbuK_Q154) (Coxiella burnetii (strain Q154)).